The chain runs to 375 residues: MVDNSKIRVVVGMSGGVDSSVSALLLKQQGYDVVGVFMKNWDDTNDDGVCTATEDYEDVKKVADKIGIPYYSINFEKEYWERVFQYFLKEYKAGRTPNPDIMCNTEVKFKSFLEYALDLDADYLAMGHYAKTMVDENGVTHMMRPKDGNKDQTYFLSQLTQEQIKRVMFPLQDLTKPEVRRIAEEAGLVNAKKKDSTGICFIGERNFKHFLSEFLPAQGGDMVTPDGKVVGHHAGLMYYTIGQRQGLGLGSTKESTAPWFVVGKDLEKNQLIVEQGYDSPRLYADRLQASGMTFFTGNPEEDTEFKATAKFRYRQCDVGVTVKYYAASKTADVYFDEPARAVTPGQALVLYNGEECLGGGNIDAAFKDDKKLQLV.

ATP contacts are provided by residues 12 to 19 (GMSGGVDS) and M38. Residues 98–100 (NPD) form an interaction with target base in tRNA region. The active-site Nucleophile is C103. C103 and C200 are joined by a disulfide. Position 127 (G127) interacts with ATP. The tract at residues 150–152 (KDQ) is interaction with tRNA. C200 acts as the Cysteine persulfide intermediate in catalysis. The segment at 312–313 (RY) is interaction with tRNA.

It belongs to the MnmA/TRMU family.

The protein resides in the cytoplasm. The catalysed reaction is S-sulfanyl-L-cysteinyl-[protein] + uridine(34) in tRNA + AH2 + ATP = 2-thiouridine(34) in tRNA + L-cysteinyl-[protein] + A + AMP + diphosphate + H(+). In terms of biological role, catalyzes the 2-thiolation of uridine at the wobble position (U34) of tRNA, leading to the formation of s(2)U34. The sequence is that of tRNA-specific 2-thiouridylase MnmA from Lactobacillus delbrueckii subsp. bulgaricus (strain ATCC BAA-365 / Lb-18).